The following is a 442-amino-acid chain: Putative ammonium transporter sll1017 (442 aa).

Helical transmembrane passes span 5–25 (NFPL…VGVA), 44–64 (LFLL…AMLE), 81–101 (TFDV…LMYG), 104–124 (PVLG…LDNV), 133–153 (WLFQ…AVMG), 155–175 (MYFK…YPIS), 193–213 (FAGS…AVVV), 240–260 (GVFI…LAFV), 269–289 (MLIA…ALAF), 299–319 (PNLL…TAGC), 325–345 (WSAI…TKLL), 354–374 (VGAW…VGIF), and 386–406 (IVGS…LFYV).

This sequence belongs to the ammonia transporter channel (TC 1.A.11.2) family.

The protein resides in the cell membrane. This chain is Putative ammonium transporter sll1017, found in Synechocystis sp. (strain ATCC 27184 / PCC 6803 / Kazusa).